We begin with the raw amino-acid sequence, 262 residues long: Aminoglycoside 3'-phosphotransferase (262 aa).

Residue Asp-187 is the Proton acceptor of the active site.

This sequence belongs to the aminoglycoside phosphotransferase family. In terms of assembly, monomer.

Its subcellular location is the cytoplasm. The enzyme catalyses kanamycin A + ATP = kanamycin 3'-phosphate + ADP + H(+). Resistance to butirosin and structurally-related aminoglycosides, including kanamycin and amikacin. The chain is Aminoglycoside 3'-phosphotransferase from Niallia circulans (Bacillus circulans).